Here is a 101-residue protein sequence, read N- to C-terminus: Large ribosomal subunit protein bL21 (101 aa).

Belongs to the bacterial ribosomal protein bL21 family. As to quaternary structure, part of the 50S ribosomal subunit. Contacts protein L20.

Its function is as follows. This protein binds to 23S rRNA in the presence of protein L20. The protein is Large ribosomal subunit protein bL21 of Magnetococcus marinus (strain ATCC BAA-1437 / JCM 17883 / MC-1).